Reading from the N-terminus, the 481-residue chain is Proline--tRNA ligase (481 aa).

This sequence belongs to the class-II aminoacyl-tRNA synthetase family. ProS type 3 subfamily. In terms of assembly, homodimer.

The protein resides in the cytoplasm. It carries out the reaction tRNA(Pro) + L-proline + ATP = L-prolyl-tRNA(Pro) + AMP + diphosphate. Functionally, catalyzes the attachment of proline to tRNA(Pro) in a two-step reaction: proline is first activated by ATP to form Pro-AMP and then transferred to the acceptor end of tRNA(Pro). The chain is Proline--tRNA ligase from Prosthecochloris aestuarii (strain DSM 271 / SK 413).